The primary structure comprises 185 residues: UPF0149 protein PFL_5969 (185 aa).

Belongs to the UPF0149 family.

This Pseudomonas fluorescens (strain ATCC BAA-477 / NRRL B-23932 / Pf-5) protein is UPF0149 protein PFL_5969.